We begin with the raw amino-acid sequence, 374 residues long: Homoserine O-acetyltransferase (374 aa).

The region spanning 45–353 (NAILVLHALT…PYGHDAFLIE (309 aa)) is the AB hydrolase-1 domain. Catalysis depends on Ser-151, which acts as the Nucleophile. Arg-220 is a binding site for substrate. Active-site residues include Asp-314 and His-347. Substrate is bound at residue Asp-348.

Belongs to the AB hydrolase superfamily. MetX family. As to quaternary structure, homodimer.

It localises to the cytoplasm. It carries out the reaction L-homoserine + acetyl-CoA = O-acetyl-L-homoserine + CoA. Its pathway is amino-acid biosynthesis; L-methionine biosynthesis via de novo pathway; O-acetyl-L-homoserine from L-homoserine: step 1/1. Functionally, transfers an acetyl group from acetyl-CoA to L-homoserine, forming acetyl-L-homoserine. This Moorella thermoacetica (strain ATCC 39073 / JCM 9320) protein is Homoserine O-acetyltransferase.